A 286-amino-acid chain; its full sequence is ATP synthase gamma chain (286 aa).

Belongs to the ATPase gamma chain family. In terms of assembly, F-type ATPases have 2 components, CF(1) - the catalytic core - and CF(0) - the membrane proton channel. CF(1) has five subunits: alpha(3), beta(3), gamma(1), delta(1), epsilon(1). CF(0) has three main subunits: a, b and c.

Its subcellular location is the cell membrane. In terms of biological role, produces ATP from ADP in the presence of a proton gradient across the membrane. The gamma chain is believed to be important in regulating ATPase activity and the flow of protons through the CF(0) complex. The chain is ATP synthase gamma chain from Bacillus mycoides (strain KBAB4) (Bacillus weihenstephanensis).